We begin with the raw amino-acid sequence, 293 residues long: Ribosomal RNA small subunit methyltransferase A (293 aa).

6 residues coordinate S-adenosyl-L-methionine: Asn-29, Leu-31, Gly-56, Glu-77, Asp-102, and Asn-127.

The protein belongs to the class I-like SAM-binding methyltransferase superfamily. rRNA adenine N(6)-methyltransferase family. RsmA subfamily.

The protein localises to the cytoplasm. It catalyses the reaction adenosine(1518)/adenosine(1519) in 16S rRNA + 4 S-adenosyl-L-methionine = N(6)-dimethyladenosine(1518)/N(6)-dimethyladenosine(1519) in 16S rRNA + 4 S-adenosyl-L-homocysteine + 4 H(+). Specifically dimethylates two adjacent adenosines (A1518 and A1519) in the loop of a conserved hairpin near the 3'-end of 16S rRNA in the 30S particle. May play a critical role in biogenesis of 30S subunits. The protein is Ribosomal RNA small subunit methyltransferase A of Lysinibacillus sphaericus (strain C3-41).